We begin with the raw amino-acid sequence, 1077 residues long: MEPFVVKENIIASASSPMKKRRIDHTESADGSAINASNSSSIGLNNSIGGNDTVMSMAEFGNDNSNNQEIDEDLHSRQLAVYGRETMRKLFASNVLISGMQGLGVEIAKNIILAGVKSVTLHDENVVELWDLSSNFVFTEEDIGKNRALASVHKLQELNNAVAVSTLTGKLTKEQLSDFQVVVFVDISFEKATEIDDYCHSHQPPIAFIKADVRGLFGSLFCDFGPHFTVLDVDGEEPHSGIIASVSNENPGFVSCVDDERLEFEDGNLVVFSEVEGMTELNDGKPRKIKNVKPFSFTLEEDTSSYGQYMKGGIVTQVKQPKVLNFKPLREALKDPGDFLLSDFSKFDRPPLLHLAFQALDRFSSQAGRFPFAGSEEDAQKLVEIAVDINEGLGDARLEDVNSKLLRHLAFGSRAVLNPMAAMFGGIVGQEVVKACSGKFHPIFQFFYFDSVESLPKEPLDASEFRPQNSRYDAQISVFGSTLQKKLEDARVFVVGAGALGCEFLKNLALMGVSCGTQGKLTVTDDDVIEKSNLSRQFLFRDWNIGQAKSTVAATAAAGINSRLNIDALQNRVGPETENVFDDSFWENLTVVVNALDNVTARLYVDSRCVYFQKPLLESGTLGAKCNTQMVIPHLTENYGASRDPPEKQAPMCTVHSFPHNIDHCLTWARSEFEGLLEKTPAEVNAYLSDPVEYMKAMRTAGDAQARDTLGRVVECLEKEKCNSFQDCITWARLRFEDYFANRVKQLCYTFPEDAATSTGAPFWSAPKRFPRPLQFSSTDLSHINFVMAASILRAETFGIPTPEWAKTRAGLAEAVERVIVPDFEPKKDATIVTDEKATTLSTASVDDAAVIDELNAKLVRCRMSLQPEFRMKAIQFEKDDDTNYHMDMIAGLANMRARNYSVPEVDKLKAKFIAGRIIPAIATSTAMATGFVCLEMYKVLDGSHKVEDYRNTFANLALPLFSMAEPVPPKVVKHQDQSWTVWDRWVMRGNPTLRELLDWLKEKGLNAYSISCGSSLLYNSMFSRHKERMNRRVVDLARDVAGVELPAYRRHVDVVVACEDDNDADVDIPLVSVYFA.

Residues 16–36 form a disordered region; sequence SPMKKRRIDHTESADGSAINA. ATP-binding positions include Ala499, Asp525, Arg536, Lys549, and 597 to 598; that span reads DN. Catalysis depends on Cys653, which acts as the Glycyl thioester intermediate.

Belongs to the ubiquitin-activating E1 family. In terms of assembly, monomer. Expressed in leaves, flowers, roots and stems. Detected in germinating seeds, cotyledons, hypocotyls, vascular tissues, anthers, filaments, pollen, style, stigma, sepals, petals, ovary, developing ovules, funiculi and silique walls.

It catalyses the reaction ATP + ubiquitin + [E1 ubiquitin-activating enzyme]-L-cysteine = AMP + diphosphate + S-ubiquitinyl-[E1 ubiquitin-activating enzyme]-L-cysteine.. It participates in protein modification; protein ubiquitination. Functionally, activates ubiquitin by first adenylating its C-terminal glycine residue with ATP, and thereafter linking this residue to the side chain of a cysteine residue in E1, yielding a ubiquitin-E1 thioester and free AMP. The chain is Ubiquitin-activating enzyme E1 2 (UBA2) from Arabidopsis thaliana (Mouse-ear cress).